A 609-amino-acid chain; its full sequence is Pescadillo homolog (609 aa).

One can recognise a BRCT domain in the interval 320 to 413 (KLKNLFKGLK…KLLPTNKYFI (94 aa)). Disordered regions lie at residues 443 to 462 (DEFEKQERAEGISDDEDEDF) and 488 to 609 (ALNS…EILA). Basic and acidic residues-rich tracts occupy residues 444 to 453 (EFEKQERAEG) and 488 to 498 (ALNSGEAKKEQ). Residues 481 to 509 (FREEKAEALNSGEAKKEQAEEDNEDDDQE) are a coiled coil. Acidic residues predominate over residues 499-512 (AEEDNEDDDQEPDQ). Basic and acidic residues-rich tracts occupy residues 513 to 524 (DETKKQRSEKKQ) and 533 to 552 (VFKENPKEQKQLTKQEEALR). A coiled-coil region spans residues 539–607 (KEQKQLTKQE…QKRKAQRKEI (69 aa)). The segment covering 554 to 564 (KMVKSRHKKLY) has biased composition (basic residues). Positions 567–609 (LLDKQKKATKEANLLREKRQQIDKQKRKEQTQKRKAQRKEILA) are enriched in basic and acidic residues.

The protein belongs to the pescadillo family.

It localises to the nucleus. The protein resides in the nucleolus. The protein localises to the nucleoplasm. Its function is as follows. Required for maturation of ribosomal RNAs and formation of the large ribosomal subunit. In Aedes aegypti (Yellowfever mosquito), this protein is Pescadillo homolog.